Reading from the N-terminus, the 529-residue chain is Glycerol kinase 5 (529 aa).

ATP-binding residues include serine 28 and serine 29. Residues arginine 98, aspartate 275, and glutamine 276 each contribute to the glycerol site. Residues threonine 297, glycine 340, and glycine 440 each contribute to the ATP site.

The protein belongs to the FGGY kinase family.

The protein localises to the cytoplasm. The enzyme catalyses glycerol + ATP = sn-glycerol 3-phosphate + ADP + H(+). It participates in polyol metabolism; glycerol degradation via glycerol kinase pathway; sn-glycerol 3-phosphate from glycerol: step 1/1. Functionally, skin-specific kinase that plays a key role in glycerol metabolism, catalyzing its phosphorylation to produce sn-glycerol 3-phosphate. Involved in skin-specific regulation of sterol regulatory element-binding protein (SREBP) processing and lipid biosynthesis. This is Glycerol kinase 5 from Homo sapiens (Human).